Here is a 383-residue protein sequence, read N- to C-terminus: Peroxisomal membrane protein PEX15 (383 aa).

At 1–331 (MAASEIMNNL…AVLKHHFTRS (331 aa)) the chain is on the cytoplasmic side. A helical membrane pass occupies residues 332–349 (VLNKNGLLLTGLLLLLCL). Residues 350-383 (KKYKSLMAIFKHVPAAFHTVYPQIVGLLKLLASI) lie on the Lumenal side of the membrane.

As to quaternary structure, interacts with PEX6. Interacts with PEX19; targets PEX15 to the peroxisome. In terms of processing, phosphorylated.

The protein resides in the peroxisome membrane. It is found in the endoplasmic reticulum membrane. Functionally, peroxisomal docking factor that anchors PEX1 and PEX6 to peroxisome membranes. PEX26 is therefore required for the formation of the PEX1-PEX6 AAA ATPase complex, a complex that mediates the extraction of the PEX5 receptor from peroxisomal membrane. This Saccharomyces cerevisiae (strain ATCC 204508 / S288c) (Baker's yeast) protein is Peroxisomal membrane protein PEX15 (PEX15).